The primary structure comprises 400 residues: CinA-like protein (400 aa).

The protein belongs to the CinA family.

The sequence is that of CinA-like protein from Escherichia coli (strain SMS-3-5 / SECEC).